We begin with the raw amino-acid sequence, 353 residues long: MSEPLKPRIDFDGPLQAEKIPPLKSARAFDTLEADNFAPARLVTGEEEEGAAEAVVESVLRPKRSLWRRMVSAGLAIFGVSVVAQGVQWTANAWQTQDWIALGGCVAGALIVGAGVGSVATEWRRLWRLRQRAHERDEARDMLHSHAVGKAKAFCEKLAQQAGLDQSHPALQRWYAAIHETQSDREVVSLYAQLVQPVLDAQARREISRSAAESTLMIAVSPLALVDMAFIAWRNLRLINRIATLYGIELGYYSRLRLFRLVLLNIAFAGASELVREVGMDWMSQDLAARLSARAAQGIGAGLLTARLGIKAMELCRPLPWIADDKPRLGDFRRELIGQLKETLQKSKTSPEK.

3 helical membrane passes run 70-90 (MVSA…VQWT), 99-119 (WIAL…VGSV), and 213-233 (ESTL…FIAW).

The protein belongs to the UPF0283 family.

It localises to the cell inner membrane. The sequence is that of UPF0283 membrane protein KPK_3110 from Klebsiella pneumoniae (strain 342).